The sequence spans 383 residues: Protein RecA (383 aa).

Residue 79 to 86 (GPESSGKT) coordinates ATP.

Belongs to the RecA family.

The protein resides in the cytoplasm. Its function is as follows. Can catalyze the hydrolysis of ATP in the presence of single-stranded DNA, the ATP-dependent uptake of single-stranded DNA by duplex DNA, and the ATP-dependent hybridization of homologous single-stranded DNAs. It interacts with LexA causing its activation and leading to its autocatalytic cleavage. This chain is Protein RecA, found in Streptococcus gordonii (strain Challis / ATCC 35105 / BCRC 15272 / CH1 / DL1 / V288).